A 917-amino-acid polypeptide reads, in one-letter code: Low-density lipoprotein receptor-related protein 8 (917 aa).

The signal sequence occupies residues 1–24 (MCRPALARLLLLQLLLLKLYLGKG). Residues 25 to 838 (AMKECDKDQF…GQGFDSTVTA (814 aa)) lie on the Extracellular side of the membrane. LDL-receptor class A domains are found at residues 28 to 64 (ECDKDQFQCRNERCIPAVWACDEDNDCSDNSDEADCP), 67 to 105 (TCAETDFACDNGHCIPDRWKCDGEEECSDGSDESEAACT), 108 to 146 (VCPAEKISCGDLSNKCIPSSWRCDGQKDCESGIDEAGCA), 148 to 184 (ACSPDEFQCSNKTCISINFVCDGYNNCGDGSDEKKCS), and 187 to 225 (TCSPNEFQCNNSVCIPQLWVCDNQADCEDHSDESIERCG). 29 disulfide bridges follow: Cys29–Cys41, Cys36–Cys54, Cys48–Cys63, Cys68–Cys80, Cys75–Cys93, Cys87–Cys104, Cys109–Cys123, Cys116–Cys136, Cys130–Cys145, Cys149–Cys161, Cys156–Cys174, Cys168–Cys183, Cys188–Cys200, Cys195–Cys213, Cys207–Cys224, Cys241–Cys259, Cys253–Cys268, Cys273–Cys285, Cys280–Cys298, Cys292–Cys307, Cys313–Cys326, Cys321–Cys339, Cys333–Cys350, Cys355–Cys366, Cys362–Cys375, Cys377–Cys389, Cys395–Cys405, Cys401–Cys414, and Cys416–Cys429. 6 residues coordinate Ca(2+): Trp46, Asp49, Asp51, Asp53, Asp59, and Glu60. Residue Asn158 is glycosylated (N-linked (GlcNAc...) asparagine). A glycan (N-linked (GlcNAc...) asparagine) is linked at Asn196. 2 LDL-receptor class A domains span residues 272–308 (TCRPDEFQCGDGTCIHGAKQCDKVHDCPDNSDEAGCV) and 312–351 (ACESPSKFQCKSGECIDGGKVCDLHRDCRDWSDEPLKECG). Residues 346–390 (PLKECGINECSLNNGGCSHICKDLKIGYECECPPGYKLLDKKTCG) form the EGF-like 1 domain. One can recognise an EGF-like 2; calcium-binding domain in the interval 391 to 430 (DIDECENPDACSQICINYKGDYKCECYEGYEMDTLSKNCK). LDL-receptor class B repeat units follow at residues 476-522 (NRIY…DWVH), 523-565 (KNIY…DPTR), 566-609 (RFMY…DLLN), 610-652 (QRLY…AVFE), and 653-695 (DRVF…FHEL). N-linked (GlcNAc...) asparagine glycosylation occurs at Asn532. The N-linked (GlcNAc...) asparagine glycan is linked to Asn628. Residues 754-813 (TTPATVEVPTTTTSHPAATSTVTVTGSANTTTAVIPRAVSEATTAIPSSHSTTSLLIDSE) are clustered O-linked oligosaccharides. N-linked (GlcNAc...) asparagine glycans are attached at residues Asn782 and Asn820. A helical transmembrane segment spans residues 839 to 861 (AVIGIVIPVVVIGLLCMGGYLIW). The Cytoplasmic segment spans residues 862 to 917 (RNWKRKNTKSMNFDNPVYRKTTEEEDEDEIHIGRTAQIGHVYPARVALSLEDDGLP).

Belongs to the LDLR family. In terms of assembly, homooligomer. Mainly in brain.

It localises to the cell membrane. Its function is as follows. Cell surface receptor for Reelin (RELN) and apolipoprotein E (apoE)-containing ligands. Also binds alpha2-macroglobulin. LRP8 participates in transmitting the extracellular Reelin signal to intracellular signaling processes, by binding to DAB1 on its cytoplasmic tail. Reelin acts via both the VLDL receptor (VLDLR) and LRP8 to regulate DAB1 tyrosine phosphorylation and microtubule function in neurons. LRP8 has higher affinity for Reelin than VLDLR. LRP8 is thus a key component of the Reelin pathway which governs neuronal layering of the forebrain during embryonic brain development. Not required for endocytic uptake of SEPP1 in the kidney which is mediated by LRP2. This Gallus gallus (Chicken) protein is Low-density lipoprotein receptor-related protein 8 (LRP8).